The chain runs to 931 residues: GPI ethanolamine phosphate transferase 1 (931 aa).

Residue M1 is a topological domain, cytoplasmic. Residues L2–F24 traverse the membrane as a helical segment. Residues T25–F442 lie on the Lumenal side of the membrane. N-linked (GlcNAc...) asparagine glycosylation is found at N128, N192, and N350. The chain crosses the membrane as a helical span at residues L443–I463. At K464–H482 the chain is on the cytoplasmic side. Residues L483–A503 form a helical membrane-spanning segment. Residues C504–Y508 lie on the Lumenal side of the membrane. Residues Y509 to I529 form a helical membrane-spanning segment. Topologically, residues Q530–H543 are cytoplasmic. The helical transmembrane segment at F544 to Y564 threads the bilayer. Position 565 (R565) is a topological domain, lumenal. Residues Y566–T586 traverse the membrane as a helical segment. Residues R587–T591 are Cytoplasmic-facing. Residues S592–G612 form a helical membrane-spanning segment. At R613 to S618 the chain is on the lumenal side. A helical transmembrane segment spans residues L619 to M639. Topologically, residues K640 to E649 are cytoplasmic. A helical membrane pass occupies residues L650–T670. At Q671–Q685 the chain is on the lumenal side. The helical transmembrane segment at I686 to L706 threads the bilayer. Over F707–L723 the chain is Cytoplasmic. Residues L724–I744 form a helical membrane-spanning segment. At N745–R786 the chain is on the lumenal side. A helical membrane pass occupies residues A787–I807. Residues N808–P824 lie on the Cytoplasmic side of the membrane. Residues F825–A845 traverse the membrane as a helical segment. Residues F846–K858 are Lumenal-facing. Residues S859 to V879 traverse the membrane as a helical segment. Topologically, residues K880–H894 are cytoplasmic. A helical transmembrane segment spans residues Y895–L915. Residues T916–M931 lie on the Lumenal side of the membrane.

Belongs to the PIGG/PIGN/PIGO family. PIGN subfamily.

The protein resides in the endoplasmic reticulum membrane. The protein operates within glycolipid biosynthesis; glycosylphosphatidylinositol-anchor biosynthesis. Its function is as follows. Ethanolamine phosphate transferase that catalyzes an ethanolamine phosphate (EtNP) transfer from phosphatidylethanolamine (PE) to the 2-OH position of the first alpha-1,4-linked mannose of the alpha-D-Man-(1-&gt;6)-alpha-D-Man-(1-&gt;4)-alpha-D-GlcN-(1-&gt;6)-(1-radyl,2-acyl-sn-glycero-3-phospho)-2-acyl-inositol (also termed H3) intermediate to generate an alpha-D-Man-(1-&gt;6)-2-PEtn-alpha-D-Man-(1-&gt;4)-alpha-D-GlcN-(1-&gt;6)-(1-radyl,2-acyl-sn-glycero-3-phospho)-2-acyl-inositol and participates in the eighth step of the glycosylphosphatidylinositol-anchor biosynthesis. May act as suppressor of replication stress and chromosome missegregation. In Homo sapiens (Human), this protein is GPI ethanolamine phosphate transferase 1.